A 33-amino-acid polypeptide reads, in one-letter code: Dermaseptin-H9 (33 aa).

Leucine amide is present on Leu-33.

This sequence belongs to the frog skin active peptide (FSAP) family. Dermaseptin subfamily. In terms of tissue distribution, expressed by the skin glands.

It is found in the secreted. Has antimicrobial activity. The chain is Dermaseptin-H9 from Pithecopus hypochondrialis (Orange-legged leaf frog).